Here is a 227-residue protein sequence, read N- to C-terminus: Lipoprotein-releasing system ATP-binding protein LolD (227 aa).

The region spanning 7–227 (LQLTGVERHY…TISDGKIVDF (221 aa)) is the ABC transporter domain. Residue 43 to 50 (APSGTGKS) coordinates ATP.

The protein belongs to the ABC transporter superfamily. Lipoprotein translocase (TC 3.A.1.125) family. As to quaternary structure, the complex is composed of two ATP-binding proteins (LolD) and two transmembrane proteins (LolC and LolE).

The protein localises to the cell inner membrane. Part of the ABC transporter complex LolCDE involved in the translocation of mature outer membrane-directed lipoproteins, from the inner membrane to the periplasmic chaperone, LolA. Responsible for the formation of the LolA-lipoprotein complex in an ATP-dependent manner. The protein is Lipoprotein-releasing system ATP-binding protein LolD of Rhizobium johnstonii (strain DSM 114642 / LMG 32736 / 3841) (Rhizobium leguminosarum bv. viciae).